Consider the following 116-residue polypeptide: Host transcription reprogramming factor 4 (116 aa).

An N-terminal signal peptide occupies residues 1–24 (MHIIHISKFMALLAISTIAIPTRG). Residues 24–53 (GRSEVDSRDVNQAQTVTSGSSIAPSGSEKR) are disordered. A compositionally biased stretch (polar residues) spans 33–47 (VNQAQTVTSGSSIAP). A C2H2-type; degenerate zinc finger spans residues 74–96 (FQCPHCKDGISNRVALYTHVKAF).

It is found in the secreted. It localises to the host nucleus. Its function is as follows. Probable secreted effector that translocates into the nuclei of host cells to reprogram the expression of targeted genes by binding on effector binding elements in rice. The chain is Host transcription reprogramming factor 4 from Pyricularia oryzae (strain 70-15 / ATCC MYA-4617 / FGSC 8958) (Rice blast fungus).